A 397-amino-acid polypeptide reads, in one-letter code: Tryptophan synthase beta chain (397 aa).

Lys-86 is subject to N6-(pyridoxal phosphate)lysine.

It belongs to the TrpB family. Tetramer of two alpha and two beta chains. It depends on pyridoxal 5'-phosphate as a cofactor.

It catalyses the reaction (1S,2R)-1-C-(indol-3-yl)glycerol 3-phosphate + L-serine = D-glyceraldehyde 3-phosphate + L-tryptophan + H2O. Its pathway is amino-acid biosynthesis; L-tryptophan biosynthesis; L-tryptophan from chorismate: step 5/5. Its function is as follows. The beta subunit is responsible for the synthesis of L-tryptophan from indole and L-serine. The sequence is that of Tryptophan synthase beta chain from Aeromonas salmonicida (strain A449).